Reading from the N-terminus, the 63-residue chain is UPF0337 protein RA1131 (63 aa).

Residues 1 to 63 (MGSAKDKVAG…DAVKGAVDKT (63 aa)) form a disordered region. A compositionally biased stretch (low complexity) spans 34-49 (AKGAAQEAKGGAQQAK). Residues 51-63 (KLKDAVKGAVDKT) are compositionally biased toward basic and acidic residues.

The protein belongs to the UPF0337 (CsbD) family.

In Rhizobium meliloti (strain 1021) (Ensifer meliloti), this protein is UPF0337 protein RA1131.